The chain runs to 923 residues: Tyrosine-protein kinase receptor torso (923 aa).

The N-terminal stretch at 1–20 (MLIFYAKYAFIFWFFVGSNQ) is a signal peptide. The Extracellular portion of the chain corresponds to 21–399 (GEMLLMDKIS…VLLSEGNMVK (379 aa)). Asn-37, Asn-63, Asn-107, Asn-142, Asn-146, Asn-287, Asn-298, Asn-314, Asn-326, Asn-342, Asn-348, and Asn-377 each carry an N-linked (GlcNAc...) asparagine glycan. Residues 400–420 (LVLFIIVPICCILMLCSLTFC) traverse the membrane as a helical segment. Topologically, residues 421-923 (RRNRSEVQAL…EEELYLEPLN (503 aa)) are cytoplasmic. The Protein kinase domain occupies 475-874 (VLLQDVLGEG…TFSALKHRLG (400 aa)). ATP is bound by residues 481–489 (LGEGAFGLV) and Lys-502. The residue at position 608 (Ser-608) is a Phosphoserine. Residues 656 to 687 (YIPKTAEAPKDRPKRKLKPQPKKDSKQDFKSD) form a disordered region. Basic and acidic residues predominate over residues 676–687 (PKKDSKQDFKSD). The active-site Proton acceptor is the Asp-741.

The protein belongs to the protein kinase superfamily. Tyr protein kinase family. The cofactor is Mg(2+). Post-translationally, may be auto-phosphorylated on tyrosine residues.

The protein localises to the membrane. The enzyme catalyses L-tyrosyl-[protein] + ATP = O-phospho-L-tyrosyl-[protein] + ADP + H(+). In terms of biological role, probable receptor tyrosine kinase which is required for determination of anterior and posterior terminal structures in the embryo. During postembryonic development, involved in the initiation of metamorphosis probably by inducing the production of ecdysone in response to prothoracicotropic hormone Ptth. Binding to Ptth stimulates activation of canonical MAPK signaling leading to ERK phosphorylation. In Drosophila melanogaster (Fruit fly), this protein is Tyrosine-protein kinase receptor torso (tor).